Here is a 442-residue protein sequence, read N- to C-terminus: tRNA modification GTPase MnmE (442 aa).

(6S)-5-formyl-5,6,7,8-tetrahydrofolate-binding residues include R22, E79, and K119. The TrmE-type G domain maps to 216–366 (GIKTCLVGAP…LLEKIKSIFA (151 aa)). N226 provides a ligand contact to K(+). GTP contacts are provided by residues 226 to 231 (NSGKSS), 245 to 251 (SEIPGTT), and 270 to 273 (DTAG). A Mg(2+)-binding site is contributed by S230. K(+)-binding residues include S245, I247, and T250. T251 is a Mg(2+) binding site. Position 442 (K442) interacts with (6S)-5-formyl-5,6,7,8-tetrahydrofolate.

It belongs to the TRAFAC class TrmE-Era-EngA-EngB-Septin-like GTPase superfamily. TrmE GTPase family. As to quaternary structure, homodimer. Heterotetramer of two MnmE and two MnmG subunits. K(+) is required as a cofactor.

It is found in the cytoplasm. Functionally, exhibits a very high intrinsic GTPase hydrolysis rate. Involved in the addition of a carboxymethylaminomethyl (cmnm) group at the wobble position (U34) of certain tRNAs, forming tRNA-cmnm(5)s(2)U34. This is tRNA modification GTPase MnmE from Mesomycoplasma hyopneumoniae (strain 7448) (Mycoplasma hyopneumoniae).